A 547-amino-acid chain; its full sequence is Mercuric reductase (547 aa).

Residues 5–70 (APTELAITGM…AVVASGYGVH (66 aa)) enclose the HMA domain. Cysteine 16 and cysteine 19 together coordinate a metal cation. FAD is bound by residues alanine 96 and threonine 121. Cysteines 122 and 127 form a disulfide. FAD is bound by residues lysine 131, alanine 197, aspartate 389, and valine 397. Residues cysteine 544 and cysteine 545 each coordinate Hg(2+).

It belongs to the class-I pyridine nucleotide-disulfide oxidoreductase family. As to quaternary structure, homodimer. FAD serves as cofactor.

It catalyses the reaction Hg + NADP(+) + H(+) = Hg(2+) + NADPH. Resistance to Hg(2+) in bacteria appears to be governed by a specialized system which includes mercuric reductase. MerA protein is responsible for volatilizing mercury as Hg(0). The sequence is that of Mercuric reductase (merA) from Acidithiobacillus ferrooxidans (Thiobacillus ferrooxidans).